The chain runs to 349 residues: MAQQAPDREKALELAMAQIDKNFGKGSVMRLGEEVRQPISVIPTGSISLDVALGIGGLPRGRVIEIYGPESSGKTTVALHAVANAQAAGGIAAFIDAEHALDPEYAKKLGVDTDSLLVSQPDTGEQALEIADMLVRSGALDIIVIDSVAALVPRAEIEGEMGDSHVGLQARLMSQALRKMTGALNNSGTTAIFINQLREKIGVMFGSPETTTGGKALKFYASVRLDVRRIETLKDGTDAVGNRTRVKVVKNKVSPPFKQAEFDILYGQGISREGSLIDMGVEHGFIRKSGSWFTYEGEQLGQGKENARKFLLENTDVANEIEKKIKEKLGIGAVVTAEADDVLPAPVDF.

Position 71–75 (71–75 (SSGKT)) interacts with phosphate. ATP is bound by residues 71-76 (SSGKTT) and 102-105 (DPEY). Glutamine 196 is a binding site for phosphate.

It belongs to the RecA family. As to quaternary structure, polymerizes non-specifically on ssDNA to form filaments. Interacts with and activates LexA leading to autocatalytic cleavage of LexA, which derepresses the SOS regulon and activates DNA repair.

Its subcellular location is the cytoplasm. Its function is as follows. Required for homologous recombination (HR) and the bypass of mutagenic DNA lesions (double strand breaks, DSB) by the SOS response. Can catalyze the hydrolysis of ATP in the presence of single-stranded DNA, the ATP-dependent uptake of single-stranded DNA by duplex DNA, and the ATP-dependent hybridization of homologous single-stranded DNAs. Numerous X-ray crystals have been resolved under different conditions which indicate the flexibility of the protein, essential to its function. Gln-196 contributes to this plasticity by acting as a switch residue, which transmits the effect of nucleotide binding to the DNA-binding region. This is Protein RecA from Mycolicibacterium smegmatis (strain ATCC 700084 / mc(2)155) (Mycobacterium smegmatis).